The primary structure comprises 956 residues: MGKVSANNQSGFFKFYIDTALLLNAEFISSFTNCINSEYNGKVKISYSSSSQQFKVIVYEEHKREAFSLFEEIVQKLKRESTVYKKPRLDIHPFGQLHYDFTTLLNFQRYLDLGYGIEDVKIKENEDIVKSKVGKKPTSSDFYIPCLIKPKIITPFEWEGNFKQVIYSPTVYNGSFKRLFYLPDNNDLLKEFAHATNTKYKASLKDNKIVVLANNDQDINAMLEKMKHIENLVSQKVYEYPEETLVYAGKIAPCQLKFLKLKFENEILYTAMHTTSIFKSVFNILGSFYTMRLLRNKHDGDSYELVPVFAKNPSKTPPCNDNFKIFSDDIKLIGCKIFAGVSLNFSSPKPAHRFYELNKTSSNLSIPVLQKPSNFHSSSTELSDNSIHQGRRAVDPVVNQNNPSNFEEMIMNKLNKLPTIDKQILGTSSLTHFQDKTTAIEHSINKSNSKQPPRFKFQLPPRPTSNTLPLEPEEELVTRYSVSSDGNTVDEAITKQSQTFQLVNSNEFNEVNANDVHKSLRQNCAKLDFDDSKSKNLLSVECLELDKGSDCSTPKSGSLTPSIDMKFLRLQDEKMDDLGDNYYTILMSSNPVSSYGVGSLYLFQPKIVCSEKYINHEEIDNMNLKSLHRWLSRSLHVLQSFSGEIELNLEFGVILYPNISSDVSACSHGFMNIYKDLNLPRSYFADCITKSVSNIDSLLNTPVKILFGRTEYTYPLIEHEVLDSKNYFVFKGSLLFTDDKRNKTEDSTVFFSMICSSKLDQFAFYKDSKQSSTCTINFPLALWDSRLRIETKVPLNDAILTEFSKSIRFRNVNKDLLLVFGNMEDRVIIHSVTRINENSVPFNKNLLPHSLEFILKCSKVKSYDISPSSINSKEAFVCLDRSKESKPIESCFSLSIQSVYMQSQFKYNNSIRAGETAPWKLANKQFIGGAITENVSDLYTAAIIMVNQLGGIHPTI.

The protein resides in the cytoplasm. Its subcellular location is the cytoskeleton. The protein localises to the microtubule organizing center. It is found in the spindle pole body. Functionally, involved in RNAi-dependent heterochromatin formation and centromeric silencing. Required for the conversion of centromeric pre-small interfering RNA transcripts into small interfering RNAs, histone H3 'Lys9' methylation, and the recruitment of the RITS complex to centromeric sequences. The protein is RNA-silencing factor ers1 (ers1) of Schizosaccharomyces pombe (strain 972 / ATCC 24843) (Fission yeast).